A 580-amino-acid polypeptide reads, in one-letter code: Ran GTPase-activating protein 1 (580 aa).

7 LRR repeats span residues 48–71, 111–134, 141–168, 207–230, 235–258, 292–315, and 320–343; these read YEGL…AIAE, GAQL…GFEA, CFTL…ALTE, IGTL…ALAE, NSLL…AMAE, LHKL…SLAE, and KSDL…QVQE. The tract at residues 356-429 is disordered; the sequence is SLSDDEDEDD…PPKLPVDAST (74 aa). The span at 358–399 shows a compositional bias: acidic residues; it reads SDDEDEDDDDDDEDDDDDEDDENDDEEVEEEEEEVEEEEGGD.

It belongs to the RNA1 family. As to quaternary structure, homodimer. Identified in a complex with RANBP2 and the ubiquitin-conjugating enzyme E2 (UBE2I). Post-translationally, may be sumoylated.

Its subcellular location is the cytoplasm. The protein localises to the nucleus. It localises to the nucleoplasm. The protein resides in the nucleus envelope. It is found in the chromosome. Its subcellular location is the centromere. The protein localises to the kinetochore. It localises to the cytoskeleton. The protein resides in the spindle. In terms of biological role, GTPase activator for RAN, converting it to the GDP-bound state. Converts cytoplasmic GTP-bound RAN to GDP-bound RAN, which is required for RAN-mediated nuclear import and export. In Xenopus laevis (African clawed frog), this protein is Ran GTPase-activating protein 1 (rangap1).